A 734-amino-acid chain; its full sequence is NAD(P)H-quinone oxidoreductase subunit 5, chloroplastic (734 aa).

16 helical membrane passes run 9–29, 39–59, 89–109, 125–145, 147–167, 185–205, 224–244, 258–278, 280–300, 327–347, 354–374, 396–416, 425–445, 542–562, 605–625, and 714–734; these read WVIP…LFLV, IWAF…VHLS, IDPL…LVLI, FVYI…SNLI, IYFF…FWFT, GDFG…SLEF, LLTI…SAQF, TPIS…FLIA, LLPL…IGTL, LGYM…FHLI, ALLF…VGYS, TCFL…CFWS, WLYS…TAFY, LFPL…GIHF, SLAI…YSFF, and ISSY…FFLS.

This sequence belongs to the complex I subunit 5 family. In terms of assembly, NDH is composed of at least 16 different subunits, 5 of which are encoded in the nucleus.

It localises to the plastid. It is found in the chloroplast thylakoid membrane. The enzyme catalyses a plastoquinone + NADH + (n+1) H(+)(in) = a plastoquinol + NAD(+) + n H(+)(out). The catalysed reaction is a plastoquinone + NADPH + (n+1) H(+)(in) = a plastoquinol + NADP(+) + n H(+)(out). NDH shuttles electrons from NAD(P)H:plastoquinone, via FMN and iron-sulfur (Fe-S) centers, to quinones in the photosynthetic chain and possibly in a chloroplast respiratory chain. The immediate electron acceptor for the enzyme in this species is believed to be plastoquinone. Couples the redox reaction to proton translocation, and thus conserves the redox energy in a proton gradient. The sequence is that of NAD(P)H-quinone oxidoreductase subunit 5, chloroplastic (ndhF) from Oryza nivara (Indian wild rice).